The following is a 192-amino-acid chain: MSVITSNPWLMVLAIFIINVAYVTCLTMRTILTLKGYRYVAAIVSFLEVLVYVVGLGMVMSSLDQIQNVFAYAFGFSIGIIVGMKIEEKLALGYTVVNVTSSEYELDLPRQLRDLGYGVTHNTAYGRDGKRLILQILTPRRFEFKLIDTIKQIDEKAFIVAYEPRQIHGGFWAKGVRSKKLKQYDTDEVESI.

3 helical membrane passes run 8–28 (PWLM…CLTM), 40–60 (VAAI…GMVM), and 66–86 (IQNV…GMKI).

It belongs to the UPF0316 family.

It is found in the cell membrane. In Staphylococcus saprophyticus subsp. saprophyticus (strain ATCC 15305 / DSM 20229 / NCIMB 8711 / NCTC 7292 / S-41), this protein is UPF0316 protein SSP0880.